Consider the following 235-residue polypeptide: Elongation factor Tu (235 aa).

The tr-type G domain occupies 1-125 (KNMITGATQM…DGDKYIPTPS (125 aa)). 47-50 (NKQD) contributes to the GTP binding site.

Belongs to the TRAFAC class translation factor GTPase superfamily. Classic translation factor GTPase family. EF-Tu/EF-1A subfamily. In terms of assembly, monomer.

Its subcellular location is the cytoplasm. It catalyses the reaction GTP + H2O = GDP + phosphate + H(+). Its function is as follows. GTP hydrolase that promotes the GTP-dependent binding of aminoacyl-tRNA to the A-site of ribosomes during protein biosynthesis. In Leptolyngbya boryana (Plectonema boryanum), this protein is Elongation factor Tu (tufA).